Here is a 241-residue protein sequence, read N- to C-terminus: Penton protein H240R (241 aa).

Belongs to the asfivirus H240R family.

It localises to the virion. In terms of biological role, forms the penton at the fivefold vertices of the icosahedral capsid. Together with the minor capsid proteins (p17, p49, and M1249L), forms a complicated network immediately below the outer capsid shell, stabilizing the whole capsid. The sequence is that of Penton protein H240R from African swine fever virus (isolate Tick/Malawi/Lil 20-1/1983) (ASFV).